The following is a 288-amino-acid chain: MESVPGDYSKRVYQGVRVKHTVKDLLAEKRSGQTSNSRLNGSVSSSQSPFVQMPGSPVTSGYYGVRRSFLSDSDFHNSKQFSNDVYTSSVGKPFPCESSAGQSHAALLEPYFPQEPYGDYRPPALTPNAGSLFSASPLPPLLPPPFPGDPAHFLFRDSWEQTLPDGLSQPDPVSADALLTLPPSTSCLSQLESGSIAQHRGSSWGSSLAGAQSYSLHALEDLHHTPGYPTPPPYPFTPFMTVSNDLPPKVGPLSPDEEADTGSLHDPSPWVKEDGSIAWGSYECRRAY.

The OCA domain maps to 10-32; it reads KRVYQGVRVKHTVKDLLAEKRSG. Disordered stretches follow at residues 24–52 and 247–274; these read DLLA…PFVQ and PPKV…VKED. Positions 35–48 are enriched in low complexity; it reads SNSRLNGSVSSSQS.

This sequence belongs to the POU2AF family. In terms of assembly, interacts with POU2F3 (via the POU domain) in a DNA-dependent manner; this interaction recruits POU2AF2 to chromatin and increases POU2F3 transactivation activity. In terms of tissue distribution, expressed in tuft cells of colon mucosa, as well as in small intestine and thymus.

The protein resides in the cytoplasm. It is found in the cytosol. The protein localises to the nucleus. Transcriptional coactivator of POU2F3. This complex drives the development of tuft cells, a rare chemosensory cells that coordinate immune and neural functions within mucosal epithelial tissues. In Homo sapiens (Human), this protein is POU domain class 2-associating factor 2.